A 512-amino-acid polypeptide reads, in one-letter code: Cytochrome P450 82C3 (512 aa).

Residues 1 to 21 (MDTSLFSLFVSILVFVFIALF) traverse the membrane as a helical segment. A heme-binding site is contributed by Cys-451.

The protein belongs to the cytochrome P450 family. Heme is required as a cofactor.

The protein localises to the membrane. The protein is Cytochrome P450 82C3 (CYP82C3) of Arabidopsis thaliana (Mouse-ear cress).